The chain runs to 261 residues: Fructoselysine 6-kinase (261 aa).

It belongs to the carbohydrate kinase PfkB family. As to quaternary structure, monomer.

The catalysed reaction is N(6)-(D-fructosyl)-L-lysine + ATP = N(6)-(6-phospho-D-fructosyl)-L-lysine + ADP + H(+). The protein operates within carbohydrate metabolism; fructoselysine degradation; D-glucose 6-phosphate and lysine from fructoselysine: step 1/2. Functionally, catalyzes the ATP-dependent phosphorylation of fructoselysine to fructoselysine 6-phosphate. Functions in a fructoselysine degradation pathway that allows E.coli to grow on fructoselysine or psicoselysine. To a much lesser extenst, is also able to phosphorylate psicoselysine. The chain is Fructoselysine 6-kinase from Escherichia coli (strain K12).